A 359-amino-acid chain; its full sequence is Fructose-bisphosphate aldolase 1 (359 aa).

Residue Ser50 participates in D-glyceraldehyde 3-phosphate binding. Asp83 functions as the Proton donor in the catalytic mechanism. Positions 84, 105, 142, and 198 each coordinate Zn(2+). Residue Gly199 participates in dihydroxyacetone phosphate binding. His232 contacts Zn(2+). Dihydroxyacetone phosphate-binding positions include 233–235 (GSS) and 275–278 (NIDT).

This sequence belongs to the class II fructose-bisphosphate aldolase family. In terms of assembly, homodimer. Zn(2+) is required as a cofactor.

The catalysed reaction is beta-D-fructose 1,6-bisphosphate = D-glyceraldehyde 3-phosphate + dihydroxyacetone phosphate. It participates in carbohydrate biosynthesis; Calvin cycle. The protein operates within carbohydrate degradation; glycolysis; D-glyceraldehyde 3-phosphate and glycerone phosphate from D-glucose: step 4/4. In terms of biological role, catalyzes the aldol condensation of dihydroxyacetone phosphate (DHAP or glycerone-phosphate) with glyceraldehyde 3-phosphate (G3P) to form fructose 1,6-bisphosphate (FBP) in gluconeogenesis and the reverse reaction in glycolysis. The polypeptide is Fructose-bisphosphate aldolase 1 (cfxA) (Cereibacter sphaeroides (Rhodobacter sphaeroides)).